Consider the following 262-residue polypeptide: TLC domain-containing protein 4-B (262 aa).

Transmembrane regions (helical) follow at residues 6–26 (PLTVFISVTSLAVFQFLFHVG), 53–73 (TVSSFHALVVGCFCLYILVYD), 90–110 (LNVAVTSGYLISDLLLIIYYW), 122–142 (HLAALYACYYVLGEGMLPYFG), 177–197 (GVLMTISFFIVRIAVIPIYYG), and 218–238 (AWIISSVSLDIMNVMWMIKIA). The 203-residue stretch at 44-246 (RQKIEWNSRT…IAKGCYKVLY (203 aa)) folds into the TLC domain.

The protein belongs to the TLCD4 family.

The protein resides in the membrane. The protein is TLC domain-containing protein 4-B (tlcd4-b) of Xenopus laevis (African clawed frog).